The chain runs to 342 residues: Succinylglutamate desuccinylase (342 aa).

3 residues coordinate Zn(2+): H63, E66, and H155. Residue E219 is part of the active site.

Belongs to the AspA/AstE family. Succinylglutamate desuccinylase subfamily. Zn(2+) is required as a cofactor.

The catalysed reaction is N-succinyl-L-glutamate + H2O = L-glutamate + succinate. The protein operates within amino-acid degradation; L-arginine degradation via AST pathway; L-glutamate and succinate from L-arginine: step 5/5. Functionally, transforms N(2)-succinylglutamate into succinate and glutamate. The protein is Succinylglutamate desuccinylase of Vibrio campbellii (strain ATCC BAA-1116).